The following is a 113-amino-acid chain: Protein ZEO1 (113 aa).

Over residues 1 to 16 (MSEIQNKAETAAQDVQ) the composition is skewed to polar residues. Residues 1 to 96 (MSEIQNKAET…AVSEKKETKK (96 aa)) are disordered. S2 carries the N-acetylserine modification. Phosphoserine is present on S2. The stretch at 2-97 (SEIQNKAETA…VSEKKETKKE (96 aa)) forms a coiled coil. Basic and acidic residues predominate over residues 17–37 (QKLEETKESLQNKGQEVKEQA). Residues K18 and K23 each participate in a glycyl lysine isopeptide (Lys-Gly) (interchain with G-Cter in ubiquitin) cross-link. S25 carries the post-translational modification Phosphoserine. Glycyl lysine isopeptide (Lys-Gly) (interchain with G-Cter in ubiquitin) cross-links involve residues K29 and K34. Position 40 is a phosphoserine (S40). K45 participates in a covalent cross-link: Glycyl lysine isopeptide (Lys-Gly) (interchain with G-Cter in ubiquitin). T49 carries the post-translational modification Phosphothreonine. Residues 53–82 (EQVKKEEQNIADGVEQKKTEAANKVEETKK) show a composition bias toward basic and acidic residues. Glycyl lysine isopeptide (Lys-Gly) (interchain with G-Cter in ubiquitin) cross-links involve residues K57 and K82.

As to quaternary structure, interacts with MID2. Post-translationally, phosphorylation of Ser-25 is induced 2-fold in response to mating pheromone.

It localises to the cell membrane. Functionally, acts antagonistically to MID2 in signaling cell wall stress to the PKC1-MPK1 cell integrity pathway. The polypeptide is Protein ZEO1 (ZEO1) (Saccharomyces cerevisiae (strain ATCC 204508 / S288c) (Baker's yeast)).